Here is a 304-residue protein sequence, read N- to C-terminus: uncharacterized protein (304 aa).

Helical transmembrane passes span 9-29 (VFYV…SIHF), 67-87 (IILY…GNMF), 100-120 (AGSI…GIFF), 131-151 (EFYI…INSS), 159-179 (FFLG…QNLI), 189-209 (AVVI…CLAF), 222-242 (IGML…GMLM), 252-272 (ITVF…IGYL), and 278-298 (INIY…LALK). EamA domains lie at 13 to 148 (LLMG…IFVI) and 171 to 298 (FIQS…LALK).

It belongs to the EamA transporter family.

It is found in the cell membrane. This is an uncharacterized protein from Haemophilus influenzae (strain ATCC 51907 / DSM 11121 / KW20 / Rd).